Here is an 85-residue protein sequence, read N- to C-terminus: Probable small nuclear ribonucleoprotein G (85 aa).

Residues 6 to 78 enclose the Sm domain; the sequence is QADPDLTKLL…ILLMEPLESM (73 aa).

Belongs to the snRNP Sm proteins family. Core component of the spliceosomal U1, U2, U4 and U5 small nuclear ribonucleoproteins (snRNPs), the building blocks of the spliceosome. Most spliceosomal snRNPs contain a common set of Sm proteins, SNRPB, SNRPD1, SNRPD2, SNRPD3, SNRPE, SNRPF and SNRPG that assemble in a heptameric protein ring on the Sm site of the small nuclear RNA to form the core snRNP. Component of the U1 snRNP. Component of the U4/U6-U5 tri-snRNP complex. Component of the U7 snRNP complex. Component of the U11/U12 snRNPs that are part of the U12-type spliceosome.

The protein localises to the cytoplasm. It is found in the cytosol. It localises to the nucleus. Its function is as follows. Plays a role in pre-mRNA splicing as a core component of the spliceosomal U1, U2, U4 and U5 small nuclear ribonucleoproteins (snRNPs), the building blocks of the spliceosome. Component of both the pre-catalytic spliceosome B complex and activated spliceosome C complexes. Is also a component of the minor U12 spliceosome. This chain is Probable small nuclear ribonucleoprotein G (snrpG), found in Dictyostelium discoideum (Social amoeba).